We begin with the raw amino-acid sequence, 1066 residues long: Isoleucine--tRNA ligase (1066 aa).

The 'HIGH' region signature appears at 47–57 (PYTTGYIHLGT). Positions 594–598 (KMSKS) match the 'KMSKS' region motif. Lys597 contacts ATP.

It belongs to the class-I aminoacyl-tRNA synthetase family. IleS type 2 subfamily. Monomer. It depends on Zn(2+) as a cofactor.

The protein resides in the cytoplasm. It carries out the reaction tRNA(Ile) + L-isoleucine + ATP = L-isoleucyl-tRNA(Ile) + AMP + diphosphate. Its function is as follows. Catalyzes the attachment of isoleucine to tRNA(Ile). As IleRS can inadvertently accommodate and process structurally similar amino acids such as valine, to avoid such errors it has two additional distinct tRNA(Ile)-dependent editing activities. One activity is designated as 'pretransfer' editing and involves the hydrolysis of activated Val-AMP. The other activity is designated 'posttransfer' editing and involves deacylation of mischarged Val-tRNA(Ile). In Methanocorpusculum labreanum (strain ATCC 43576 / DSM 4855 / Z), this protein is Isoleucine--tRNA ligase.